We begin with the raw amino-acid sequence, 599 residues long: Putative fused cobalt transport protein CbiMQ (599 aa).

The interval Met1–Ser239 is cbiM. 16 helical membrane-spanning segments follow: residues Trp12–Ile32, Leu44–Gly64, Phe74–Phe94, Thr106–Phe126, Ser140–Thr160, Leu162–Tyr182, Leu183–Leu203, Ile247–Leu267, Trp303–Leu323, Gln356–Ser376, Pro377–Ala397, Leu407–Gly427, Ile438–Ser458, Gly463–Leu483, Ile493–Ile513, and Met579–Leu599. The tract at residues Asp341 to Leu599 is cbiQ.

In the N-terminal section; belongs to the CbiM family. This sequence in the C-terminal section; belongs to the CbiQ family. Forms an energy-coupling factor (ECF) transporter complex composed of an ATP-binding protein (A component, CbiO), a transmembrane protein (T component, CbiQ) and 2 possible substrate-capture proteins (S components, CbiM and CbiN) of unknown stoichimetry.

Its subcellular location is the cell membrane. It functions in the pathway cofactor biosynthesis; adenosylcobalamin biosynthesis. Part of the energy-coupling factor (ECF) transporter complex CbiMNOQ involved in cobalt import. The sequence is that of Putative fused cobalt transport protein CbiMQ (cbiMQ) from Methanocorpusculum labreanum (strain ATCC 43576 / DSM 4855 / Z).